Consider the following 392-residue polypeptide: Lysine acetyltransferase (392 aa).

The enzyme catalyses L-lysine + acetyl-CoA = N(6)-acetyl-L-lysine + CoA + H(+). The protein operates within amino-acid degradation; L-lysine degradation via acetylation pathway; glutarate from L-lysine: step 1/6. With respect to regulation, activity is inhibited by 5-aminovalerate. Functionally, lysine N-6-acetyl transferase (LAT) that catalyzes the first step of the lysine degradation pathway. This is Lysine acetyltransferase from Yarrowia lipolytica (strain CLIB 122 / E 150) (Yeast).